The sequence spans 87 residues: Small ribosomal subunit protein uS15c (87 aa).

This sequence belongs to the universal ribosomal protein uS15 family. Part of the 30S ribosomal subunit.

It localises to the plastid. The protein resides in the chloroplast. This chain is Small ribosomal subunit protein uS15c (rps15), found in Oenothera glazioviana (Large-flowered evening primrose).